The chain runs to 195 residues: Transcription factor LBX2 (195 aa).

Disordered regions lie at residues 1-89 (MNSV…KSRT) and 164-195 (PALP…QVDD). A DNA-binding region (homeobox) is located at residues 84 to 143 (RRKSRTAFTAQQVLELERRFVFQKYLAPSERDGLAARLGLANAQVVTWFQNRRAKLKRDV). Over residues 186-195 (LSDEEIQVDD) the composition is skewed to acidic residues.

In terms of tissue distribution, expressed in the developing urogenital system, eye and brain.

The protein resides in the nucleus. Functionally, transcription factor. The chain is Transcription factor LBX2 (Lbx2) from Mus musculus (Mouse).